The following is a 256-amino-acid chain: Small ribosomal subunit protein eS1 (256 aa).

Residue Ala-2 is modified to N-acetylalanine; partial.

Belongs to the eukaryotic ribosomal protein eS1 family. In terms of assembly, component of the small ribosomal subunit. Mature ribosomes consist of a small (40S) and a large (60S) subunit. The 40S subunit contains about 33 different proteins and 1 molecule of RNA (18S). The 60S subunit contains about 49 different proteins and 3 molecules of RNA (25S, 5.8S and 5S).

The protein resides in the cytoplasm. In Candida tropicalis (strain ATCC MYA-3404 / T1) (Yeast), this protein is Small ribosomal subunit protein eS1.